Consider the following 454-residue polypeptide: Probable N-octanoylanthranilate hydrolase AqdA2 (454 aa).

Residue serine 185 is the Acyl-ester intermediate of the active site. Catalysis depends on charge relay system residues glutamate 306 and histidine 379.

This sequence belongs to the type-B carboxylesterase/lipase family.

The catalysed reaction is N-octanoylanthranilate + H2O = anthranilate + octanoate + H(+). In terms of biological role, involved in the degradation of the Pseudomonas aeruginosa quorum sensing signal molecules HHQ (2-heptyl-4-quinolone) and PQS (2-heptyl-3-hydroxy-4-quinolone) to anthranilic acid. Probably catalyzes the hydrolysis of N-octanoylanthranilic acid to anthranilic acid. The sequence is that of Probable N-octanoylanthranilate hydrolase AqdA2 from Rhodococcus erythropolis (Arthrobacter picolinophilus).